A 37-amino-acid polypeptide reads, in one-letter code: Cytochrome b6-f complex subunit 5 (37 aa).

Residues 5–25 form a helical membrane-spanning segment; that stretch reads ILLGIVLGMVVVTLAGLFVAA.

Belongs to the PetG family. The 4 large subunits of the cytochrome b6-f complex are cytochrome b6, subunit IV (17 kDa polypeptide, PetD), cytochrome f and the Rieske protein, while the 4 small subunits are PetG, PetL, PetM and PetN. The complex functions as a dimer.

The protein resides in the cellular thylakoid membrane. Component of the cytochrome b6-f complex, which mediates electron transfer between photosystem II (PSII) and photosystem I (PSI), cyclic electron flow around PSI, and state transitions. PetG is required for either the stability or assembly of the cytochrome b6-f complex. In Synechococcus sp. (strain JA-2-3B'a(2-13)) (Cyanobacteria bacterium Yellowstone B-Prime), this protein is Cytochrome b6-f complex subunit 5.